A 251-amino-acid polypeptide reads, in one-letter code: Hydroxyacylglutathione hydrolase (251 aa).

Zn(2+) is bound by residues histidine 53, histidine 55, aspartate 57, histidine 58, histidine 110, aspartate 127, and histidine 165.

The protein belongs to the metallo-beta-lactamase superfamily. Glyoxalase II family. As to quaternary structure, monomer. The cofactor is Zn(2+).

The catalysed reaction is an S-(2-hydroxyacyl)glutathione + H2O = a 2-hydroxy carboxylate + glutathione + H(+). Its pathway is secondary metabolite metabolism; methylglyoxal degradation; (R)-lactate from methylglyoxal: step 2/2. Its function is as follows. Thiolesterase that catalyzes the hydrolysis of S-D-lactoyl-glutathione to form glutathione and D-lactic acid. The sequence is that of Hydroxyacylglutathione hydrolase from Salmonella dublin (strain CT_02021853).